A 218-amino-acid chain; its full sequence is MSFVGENSGVKMGSEDWEKDEPQCCLEDPAGSPLEPGPSLPTMNFVHTSPKVKNLNPKKFSIHDQDHKVLVLDSGNLIAVPDKNYIRPEIFFALASSLSSASAEKGSPILLGVSKGEFCLYCDKDKGQSHPSLQLKKEKLMKLAAQKESARRPFIFYRAQVGSWNMLESAAHPGWFICTSCNCNEPVGVTDKFENRKHIEFSFQPVCKAEMSPSEVSD.

The disordered stretch occupies residues 1-40 (MSFVGENSGVKMGSEDWEKDEPQCCLEDPAGSPLEPGPSL). The propeptide at 1–45 (MSFVGENSGVKMGSEDWEKDEPQCCLEDPAGSPLEPGPSLPTMNF) is removed in mature form. Over residues 13–22 (GSEDWEKDEP) the composition is skewed to basic and acidic residues.

It belongs to the IL-1 family. In terms of assembly, interacts with SMAD3. Binds IL18R1, but not to IL1R1, with lower affinity than IL18, and does not seem to act as a receptor antagonist for IL18. Interacts with cargo receptor TMED10; the interaction mediates the translocation from the cytoplasm into the ERGIC (endoplasmic reticulum-Golgi intermediate compartment) and thereby secretion. In terms of processing, proteolytically converted to the mature form by CASP1. In general, low constitutive expression, if any, in healthy tissues; high expression in inflammatory counterparts, including in synovial tissues from individuals with active rheumatoid arthritis. Isoform A, isoform B and isoform C are expressed in testis, colon, placenta, lung and lymph node. Isoform D and isoform E were found only in testis and bone marrow. Whereas only isoform A is found in brain, only isoform B in kidney and only isoform C in heart.

The protein localises to the cytoplasm. Its subcellular location is the cytosol. It is found in the nucleus. The protein resides in the secreted. Its function is as follows. Immune regulatory cytokine that acts as a suppressor of innate inflammatory and immune responses involved in curbing excessive inflammation. Signaling can occur via two mechanisms, intracellularly through nuclear translocation with SMAD3 and extracellularly after secretion and binding to its receptor composed of IL18R1 and IL18RAP. Suppresses, or reduces, pro-inflammatory cytokine production, including IL1A and IL6, as well as CCL12, CSF1, CSF2, CXCL13, IL1B, IL23A and IL1RN, but spares anti-inflammatory cytokines. Inhibits dendritic cell activation. This Homo sapiens (Human) protein is Interleukin-37.